Here is a 233-residue protein sequence, read N- to C-terminus: Large ribosomal subunit protein uL1 (233 aa).

It belongs to the universal ribosomal protein uL1 family. In terms of assembly, part of the 50S ribosomal subunit.

Binds directly to 23S rRNA. The L1 stalk is quite mobile in the ribosome, and is involved in E site tRNA release. Functionally, protein L1 is also a translational repressor protein, it controls the translation of the L11 operon by binding to its mRNA. The polypeptide is Large ribosomal subunit protein uL1 (Aeromonas salmonicida (strain A449)).